A 358-amino-acid chain; its full sequence is Neutral protease 2 homolog MEP8 (358 aa).

Residues 1–19 form the signal peptide; that stretch reads MKLSSILLALAALVSPAFS. The propeptide occupies 20–179; that stretch reads YAISHLPRSE…EKAIKPVDKR (160 aa). 2 disulfide bridges follow: Cys186-Cys256 and Cys263-Cys281. His305 provides a ligand contact to Zn(2+). Glu306 is a catalytic residue. Zn(2+) is bound by residues His309 and Asp320.

The protein belongs to the peptidase M35 family. The cofactor is Zn(2+).

The protein localises to the secreted. It carries out the reaction Preferential cleavage of bonds with hydrophobic residues in P1'. Also 3-Asn-|-Gln-4 and 8-Gly-|-Ser-9 bonds in insulin B chain.. Its function is as follows. Secreted metalloproteinase that allows assimilation of proteinaceous substrates. Shows high activities on basic nuclear substrates such as histone and protamine. May be involved in virulence. The polypeptide is Neutral protease 2 homolog MEP8 (MEP8) (Coccidioides posadasii (strain C735) (Valley fever fungus)).